The sequence spans 221 residues: Transmembrane emp24 domain-containing protein 3 (221 aa).

The N-terminal stretch at 1–30 (MGNEVPRASSFQMLMLLLLLLLLRAERLRG) is a signal peptide. The Lumenal portion of the chain corresponds to 31 to 184 (AELTFELPDN…RAEDLNSRVS (154 aa)). The 83-residue stretch at 42 to 124 (KQCFHEEVEQ…HKTVYFDFQV (83 aa)) folds into the GOLD domain. Dimethylated arginine is present on Arg-103. The helical transmembrane segment at 185 to 205 (YWSVGETIALFVVSFSQVLLL) threads the bilayer. The Cytoplasmic segment spans residues 206–221 (KSFFTEKRPINRAVHS). The COPII vesicle coat-binding motif lies at 208-209 (FF). The COPI vesicle coat-binding motif lies at 208–221 (FFTEKRPINRAVHS).

It belongs to the EMP24/GP25L family. As to quaternary structure, monomer in endoplasmic reticulum, endoplasmic reticulum-Golgi intermediate compartment and cis-Golgi network. Interacts (via C-terminus) with COPG1; the interaction involves dimeric TMED3; however, there are conflicting reports on the interaction. Interacts with GORASP1 and GORASP2.

The protein localises to the endoplasmic reticulum-Golgi intermediate compartment membrane. Its subcellular location is the golgi apparatus. The protein resides in the cis-Golgi network membrane. It is found in the golgi stack membrane. It localises to the endoplasmic reticulum membrane. The protein localises to the cytoplasmic vesicle. Its subcellular location is the COPI-coated vesicle membrane. Functionally, potential role in vesicular protein trafficking, mainly in the early secretory pathway. Contributes to the coupled localization of TMED2 and TMED10 in the cis-Golgi network. The sequence is that of Transmembrane emp24 domain-containing protein 3 (Tmed3) from Rattus norvegicus (Rat).